The primary structure comprises 30 residues: Photosystem I reaction center subunit XII (30 aa).

A helical transmembrane segment spans residues leucine 7–aspartate 29.

Belongs to the PsaM family.

It is found in the plastid. The protein localises to the chloroplast thylakoid membrane. This is Photosystem I reaction center subunit XII from Pinus thunbergii (Japanese black pine).